The sequence spans 388 residues: MAVTPISLRPGVLAEAVVDLGAIDYNVRVLREHAGMAQLMVVLKADAYGHGATQVALAALAAGAAELGVATVDEALALRADGISAPVLAWLHPPGIDFGPALLADVQIAVSSVRQLDELLDAVRRTGRTATVTVKADTGLNRNGVVTDQYPAMLTALQRAVVEDAVRLRGLMSHLVYADQPDNPSNDVQGKRFAALLAQAHEQGLRFEVAHLSNSSATMSRPDLAYDLVRPGIAVYGLSPVPSRGDMGLIPAMTVKCAVAMVKSIRAGEGVSYGHDWIAQHDTNLALLPVGYADGVFRSLGGRLDVLINGKRRPGVGRICMDQFVVDLGPGPIDVAEGDEAILFGPGARGEPTAQDWADLLGTIHYEVVTSLRGRITRTYREAQTVDR.

The Proton acceptor; specific for D-alanine role is filled by lysine 44. Lysine 44 carries the N6-(pyridoxal phosphate)lysine modification. Arginine 142 serves as a coordination point for substrate. The active-site Proton acceptor; specific for L-alanine is tyrosine 273. Residue methionine 321 coordinates substrate.

This sequence belongs to the alanine racemase family. Pyridoxal 5'-phosphate is required as a cofactor.

It catalyses the reaction L-alanine = D-alanine. It functions in the pathway amino-acid biosynthesis; D-alanine biosynthesis; D-alanine from L-alanine: step 1/1. Catalyzes the interconversion of L-alanine and D-alanine. May also act on other amino acids. This Mycobacterium leprae (strain TN) protein is Alanine racemase (alr).